A 720-amino-acid chain; its full sequence is Photosystem I P700 chlorophyll a apoprotein A1 (720 aa).

Helical transmembrane passes span 61–84 (VFSA…FHGA), 147–170 (LYCT…FHYH), 186–210 (LNHH…HVSL), 282–300 (TAHH…GHMY), 337–360 (WHAQ…HHMY), 376–402 (LSLF…IFMV), 424–446 (AIVS…LYIH), and 522–540 (FLVH…LILL). Residues Cys564 and Cys573 each contribute to the [4Fe-4S] cluster site. 2 helical membrane passes run 580–601 (HVFL…HFSW) and 655–677 (LSAY…MFLF). Residue His666 participates in chlorophyll a' binding. Chlorophyll a-binding residues include Met674 and Tyr682. Trp683 contacts phylloquinone. A helical transmembrane segment spans residues 715 to 720 (AVGVAH).

It belongs to the PsaA/PsaB family. As to quaternary structure, the PsaA/B heterodimer binds the P700 chlorophyll special pair and subsequent electron acceptors. PSI consists of a core antenna complex that captures photons, and an electron transfer chain that converts photonic excitation into a charge separation. The eukaryotic PSI reaction center is composed of at least 11 subunits. Requires P700 is a chlorophyll a/chlorophyll a' dimer, A0 is one or more chlorophyll a, A1 is one or both phylloquinones and FX is a shared 4Fe-4S iron-sulfur center. as cofactor.

It localises to the plastid. The protein localises to the chloroplast thylakoid membrane. The enzyme catalyses reduced [plastocyanin] + hnu + oxidized [2Fe-2S]-[ferredoxin] = oxidized [plastocyanin] + reduced [2Fe-2S]-[ferredoxin]. PsaA and PsaB bind P700, the primary electron donor of photosystem I (PSI), as well as the electron acceptors A0, A1 and FX. PSI is a plastocyanin-ferredoxin oxidoreductase, converting photonic excitation into a charge separation, which transfers an electron from the donor P700 chlorophyll pair to the spectroscopically characterized acceptors A0, A1, FX, FA and FB in turn. Oxidized P700 is reduced on the lumenal side of the thylakoid membrane by plastocyanin. The polypeptide is Photosystem I P700 chlorophyll a apoprotein A1 (Sequoia sempervirens (California redwood)).